The chain runs to 221 residues: Large ribosomal subunit protein uL3 (221 aa).

It belongs to the universal ribosomal protein uL3 family. In terms of assembly, part of the 50S ribosomal subunit. Forms a cluster with proteins L14 and L19.

Functionally, one of the primary rRNA binding proteins, it binds directly near the 3'-end of the 23S rRNA, where it nucleates assembly of the 50S subunit. The chain is Large ribosomal subunit protein uL3 from Chlamydia trachomatis serovar L2 (strain ATCC VR-902B / DSM 19102 / 434/Bu).